We begin with the raw amino-acid sequence, 876 residues long: Alanine--tRNA ligase (876 aa).

Positions 560, 564, 662, and 666 each coordinate Zn(2+).

This sequence belongs to the class-II aminoacyl-tRNA synthetase family. Zn(2+) serves as cofactor.

It localises to the cytoplasm. It catalyses the reaction tRNA(Ala) + L-alanine + ATP = L-alanyl-tRNA(Ala) + AMP + diphosphate. In terms of biological role, catalyzes the attachment of alanine to tRNA(Ala) in a two-step reaction: alanine is first activated by ATP to form Ala-AMP and then transferred to the acceptor end of tRNA(Ala). Also edits incorrectly charged Ser-tRNA(Ala) and Gly-tRNA(Ala) via its editing domain. The protein is Alanine--tRNA ligase of Synechococcus elongatus (strain ATCC 33912 / PCC 7942 / FACHB-805) (Anacystis nidulans R2).